The sequence spans 63 residues: Large ribosomal subunit protein uL29 (63 aa).

This sequence belongs to the universal ribosomal protein uL29 family.

This is Large ribosomal subunit protein uL29 from Pseudomonas aeruginosa (strain UCBPP-PA14).